The following is a 488-amino-acid chain: Probable cytochrome P450 6u1 (488 aa).

Cys430 is a binding site for heme.

The protein belongs to the cytochrome P450 family. Requires heme as cofactor.

Its subcellular location is the endoplasmic reticulum membrane. The protein resides in the microsome membrane. In terms of biological role, may be involved in the metabolism of insect hormones and in the breakdown of synthetic insecticides. The polypeptide is Probable cytochrome P450 6u1 (Cyp6u1) (Drosophila melanogaster (Fruit fly)).